The primary structure comprises 465 residues: Iron-sulfur cluster assembly SufBD family protein SE_0610 (465 aa).

Belongs to the iron-sulfur cluster assembly SufBD family.

The protein is Iron-sulfur cluster assembly SufBD family protein SE_0610 of Staphylococcus epidermidis (strain ATCC 12228 / FDA PCI 1200).